The chain runs to 434 residues: Ribosomal protein uS12 methylthiotransferase RimO (434 aa).

In terms of domain architecture, MTTase N-terminal spans 6–122 (NRVFLLSLGC…ILTAIGARYR (117 aa)). [4Fe-4S] cluster contacts are provided by cysteine 15, cysteine 51, cysteine 85, cysteine 146, cysteine 150, and cysteine 153. Residues 132 to 361 (TAPGHTSFLK…MELQEGISEE (230 aa)) form the Radical SAM core domain. The TRAM domain maps to 364–431 (KRLEGREIAV…PYELFGTVLK (68 aa)).

Belongs to the methylthiotransferase family. RimO subfamily. Requires [4Fe-4S] cluster as cofactor.

It is found in the cytoplasm. The enzyme catalyses L-aspartate(89)-[ribosomal protein uS12]-hydrogen + (sulfur carrier)-SH + AH2 + 2 S-adenosyl-L-methionine = 3-methylsulfanyl-L-aspartate(89)-[ribosomal protein uS12]-hydrogen + (sulfur carrier)-H + 5'-deoxyadenosine + L-methionine + A + S-adenosyl-L-homocysteine + 2 H(+). Functionally, catalyzes the methylthiolation of an aspartic acid residue of ribosomal protein uS12. This chain is Ribosomal protein uS12 methylthiotransferase RimO, found in Chlorobium phaeovibrioides (strain DSM 265 / 1930) (Prosthecochloris vibrioformis (strain DSM 265)).